Consider the following 551-residue polypeptide: Interleukin-2 receptor subunit beta (551 aa).

Positions 1–26 (MATLALSWCLPLLILLLPLATSSASA) are cleaved as a signal peptide. Residues 27-240 (AVNGTSRFTC…TKPAALGKDT (214 aa)) are Extracellular-facing. Asparagine 29, asparagine 43, and asparagine 71 each carry an N-linked (GlcNAc...) asparagine glycan. Cysteine 36 and cysteine 46 are joined by a disulfide. A disulfide bridge links cysteine 74 with cysteine 86. One can recognise a Fibronectin type-III domain in the interval 134 to 234 (APISLQVVHV…QPLAFRTKPA (101 aa)). An N-linked (GlcNAc...) asparagine glycan is attached at asparagine 149. Positions 220-224 (WSPWS) match the WSXWS motif motif. Residues 241 to 265 (IPWLGHLLVGLSGAFGFIILVYLLI) traverse the membrane as a helical segment. The Cytoplasmic segment spans residues 266-551 (NCRNTGPWLK…LQDQDPTHLV (286 aa)). The short motif at 278–286 (LKCHTPDPS) is the Box 1 motif element. 3 disordered regions span residues 389–417 (EEEP…EDDA), 430–484 (FSPS…DLVD), and 496–517 (AGEQ…ARPP).

This sequence belongs to the type I cytokine receptor family. Type 4 subfamily. Non-covalent dimer of an alpha and a beta subunit. IL2R exists in 3 different forms: a high affinity dimer, an intermediate affinity monomer (beta subunit), and a low affinity monomer (alpha subunit). The high and intermediate affinity forms also associate with a gamma subunit. Interacts with SHB upon interleukin stimulation.

Its subcellular location is the cell membrane. The protein resides in the cell surface. In terms of biological role, receptor for interleukin-2. This beta subunit is involved in receptor mediated endocytosis and transduces the mitogenic signals of IL2. Probably in association with IL15RA, involved in the stimulation of neutrophil phagocytosis by IL15. The sequence is that of Interleukin-2 receptor subunit beta (IL2RB) from Macaca fascicularis (Crab-eating macaque).